We begin with the raw amino-acid sequence, 341 residues long: Geranylgeranyl transferase type-2 subunit beta (341 aa).

PFTB repeat units follow at residues 15–55 (KSKH…ITMN), 62–104 (QQDV…KIYD), 122–163 (RERL…SLLN), 170–211 (ADTA…AIMN), 223–264 (VKLI…SILK), and 271–313 (LKIL…SLID). Geranylgeranyl diphosphate is bound by residues 196-198 (HAA) and 243-255 (RPEKLPDVCYSWW). Zn(2+) is bound by residues aspartate 249, cysteine 251, and histidine 301.

This sequence belongs to the protein prenyltransferase subunit beta family. As to quaternary structure, heterodimer of an alpha and a beta subunit. Zn(2+) serves as cofactor.

It catalyses the reaction geranylgeranyl diphosphate + L-cysteinyl-[protein] = S-geranylgeranyl-L-cysteinyl-[protein] + diphosphate. Its function is as follows. Catalyzes the transfer of a geranyl-geranyl moiety from geranyl-geranyl pyrophosphate to proteins having the C-terminal -XCC or -XCXC, where both cysteines may become modified. Acts on YPT1 and SEC4. The chain is Geranylgeranyl transferase type-2 subunit beta (BET2) from Candida albicans (Yeast).